We begin with the raw amino-acid sequence, 156 residues long: Snaclec A4 (156 aa).

Positions 1 to 23 are cleaved as a signal peptide; it reads MGRSISVSFGLLVVFLSLSGTGA. A disulfide bridge links cysteine 27 with cysteine 38. Positions 34-155 constitute a C-type lectin domain; it reads HEGHCYKVFN…CGQPYRFTCE (122 aa). Residue asparagine 45 is glycosylated (N-linked (GlcNAc...) asparagine). 2 cysteine pairs are disulfide-bonded: cysteine 55–cysteine 154 and cysteine 129–cysteine 146.

The protein belongs to the snaclec family. Heterodimer; disulfide-linked. Expressed by the venom gland.

Its subcellular location is the secreted. Its function is as follows. Interferes with one step of hemostasis (modulation of platelet aggregation, or coagulation cascade, for example). This is Snaclec A4 from Macrovipera lebetinus (Levantine viper).